Consider the following 72-residue polypeptide: MAKDNVIEIEGTVKETMPNAMFKVELENGHEILAHVSGKIRMHYIKILPGDKVTVEMSPYDLSKGRITYRFK.

The region spanning 1-72 (MAKDNVIEIE…SKGRITYRFK (72 aa)) is the S1-like domain.

The protein belongs to the IF-1 family. As to quaternary structure, component of the 30S ribosomal translation pre-initiation complex which assembles on the 30S ribosome in the order IF-2 and IF-3, IF-1 and N-formylmethionyl-tRNA(fMet); mRNA recruitment can occur at any time during PIC assembly.

It localises to the cytoplasm. One of the essential components for the initiation of protein synthesis. Stabilizes the binding of IF-2 and IF-3 on the 30S subunit to which N-formylmethionyl-tRNA(fMet) subsequently binds. Helps modulate mRNA selection, yielding the 30S pre-initiation complex (PIC). Upon addition of the 50S ribosomal subunit IF-1, IF-2 and IF-3 are released leaving the mature 70S translation initiation complex. The protein is Translation initiation factor IF-1 of Pediococcus pentosaceus (strain ATCC 25745 / CCUG 21536 / LMG 10740 / 183-1w).